The sequence spans 542 residues: CTP synthase (542 aa).

The segment at 1-265 (MTAFIFITGG…GRMLTELLKV (265 aa)) is amidoligase domain. CTP is bound at residue serine 13. Serine 13 is a UTP binding site. ATP is bound at residue 14–19 (SVGKGI). Tyrosine 54 lines the L-glutamine pocket. Aspartate 71 serves as a coordination point for ATP. Aspartate 71 and glutamate 140 together coordinate Mg(2+). CTP contacts are provided by residues 147–149 (DYE), 186–191 (KTKPLQ), and lysine 222. UTP contacts are provided by residues 186–191 (KTKPLQ) and lysine 222. The region spanning 297–532 (YVKLRDAYIS…LKAALARKMG (236 aa)) is the Glutamine amidotransferase type-1 domain. Glycine 352 lines the L-glutamine pocket. Cysteine 379 serves as the catalytic Nucleophile; for glutamine hydrolysis. L-glutamine is bound by residues 380–383 (YGMQ), glutamate 403, and arginine 460. Residues histidine 505 and glutamate 507 contribute to the active site.

It belongs to the CTP synthase family. Homotetramer.

It carries out the reaction UTP + L-glutamine + ATP + H2O = CTP + L-glutamate + ADP + phosphate + 2 H(+). The enzyme catalyses L-glutamine + H2O = L-glutamate + NH4(+). It catalyses the reaction UTP + NH4(+) + ATP = CTP + ADP + phosphate + 2 H(+). The protein operates within pyrimidine metabolism; CTP biosynthesis via de novo pathway; CTP from UDP: step 2/2. With respect to regulation, allosterically activated by GTP, when glutamine is the substrate; GTP has no effect on the reaction when ammonia is the substrate. The allosteric effector GTP functions by stabilizing the protein conformation that binds the tetrahedral intermediate(s) formed during glutamine hydrolysis. Inhibited by the product CTP, via allosteric rather than competitive inhibition. Functionally, catalyzes the ATP-dependent amination of UTP to CTP with either L-glutamine or ammonia as the source of nitrogen. Regulates intracellular CTP levels through interactions with the four ribonucleotide triphosphates. The sequence is that of CTP synthase from Caldivirga maquilingensis (strain ATCC 700844 / DSM 13496 / JCM 10307 / IC-167).